Reading from the N-terminus, the 362-residue chain is 3-dehydroquinate synthase (362 aa).

NAD(+)-binding positions include 71–76, 105–109, 129–130, Lys-142, Lys-151, and 169–172; these read DGEQYK, GVVGD, TT, and CLKT. Zn(2+) contacts are provided by Glu-184, His-247, and His-264.

Belongs to the sugar phosphate cyclases superfamily. Dehydroquinate synthase family. Requires Co(2+) as cofactor. Zn(2+) is required as a cofactor. It depends on NAD(+) as a cofactor.

Its subcellular location is the cytoplasm. It carries out the reaction 7-phospho-2-dehydro-3-deoxy-D-arabino-heptonate = 3-dehydroquinate + phosphate. It participates in metabolic intermediate biosynthesis; chorismate biosynthesis; chorismate from D-erythrose 4-phosphate and phosphoenolpyruvate: step 2/7. In terms of biological role, catalyzes the conversion of 3-deoxy-D-arabino-heptulosonate 7-phosphate (DAHP) to dehydroquinate (DHQ). The chain is 3-dehydroquinate synthase from Escherichia coli (strain K12 / MC4100 / BW2952).